Consider the following 429-residue polypeptide: SET domain-containing protein 14 (429 aa).

C26, C29, C39, C42, C48, C52, H60, and C64 together coordinate Zn(2+). An MYND-type zinc finger spans residues 26–64 (CNQCLTSMAELKKCSACRRLAYCSQECQRADWKLHKVEC).

It localises to the nucleus. This Caenorhabditis elegans protein is SET domain-containing protein 14 (set-14).